The sequence spans 348 residues: Uroporphyrinogen decarboxylase (348 aa).

Substrate contacts are provided by residues 24–28, D73, Y150, S205, and H324; that span reads RQAGR.

Belongs to the uroporphyrinogen decarboxylase family. Homodimer.

The protein localises to the cytoplasm. The enzyme catalyses uroporphyrinogen III + 4 H(+) = coproporphyrinogen III + 4 CO2. It participates in porphyrin-containing compound metabolism; protoporphyrin-IX biosynthesis; coproporphyrinogen-III from 5-aminolevulinate: step 4/4. Functionally, catalyzes the decarboxylation of four acetate groups of uroporphyrinogen-III to yield coproporphyrinogen-III. The chain is Uroporphyrinogen decarboxylase from Roseiflexus sp. (strain RS-1).